Reading from the N-terminus, the 682-residue chain is Methionine--tRNA ligase (682 aa).

Residues 15–25 (PYANGAIHLGH) carry the 'HIGH' region motif. The Zn(2+) site is built by Cys146, Cys149, Cys159, and Cys162. The 'KMSKS' region motif lies at 331–335 (KMSKS). Residue Lys334 participates in ATP binding. Residues 580–682 (DFAKLDMRVA…NGVTAGMQVK (103 aa)) enclose the tRNA-binding domain.

The protein belongs to the class-I aminoacyl-tRNA synthetase family. MetG type 1 subfamily. As to quaternary structure, homodimer. Zn(2+) is required as a cofactor.

The protein resides in the cytoplasm. The catalysed reaction is tRNA(Met) + L-methionine + ATP = L-methionyl-tRNA(Met) + AMP + diphosphate. Is required not only for elongation of protein synthesis but also for the initiation of all mRNA translation through initiator tRNA(fMet) aminoacylation. In Haemophilus influenzae (strain PittGG), this protein is Methionine--tRNA ligase.